We begin with the raw amino-acid sequence, 390 residues long: Isotocin receptor (390 aa).

At 1-48 the chain is on the extracellular side; the sequence is MEEMFKEQDFWSFNESSRNSTVGNETFGGNQTVNPLKRNEEVAKVEVT. N-linked (GlcNAc...) asparagine glycosylation is found at N14, N19, N24, and N30. Residues 49 to 69 form a helical membrane-spanning segment; sequence VLALVLFLALAGNLCVLIAIY. Residues 70–86 are Cytoplasmic-facing; the sequence is TAKHTQSRMYYLMKHLS. The chain crosses the membrane as a helical span at residues 87–107; that stretch reads IADLVVAVFQVLPQLIWDITF. Residues 108–124 lie on the Extracellular side of the membrane; sequence RFYGPDFLCRLVKYLQT. C116 and C191 form a disulfide bridge. The helical transmembrane segment at 125–145 threads the bilayer; it reads VGMFASTYMLVLMSIDRCIAI. Over 146–160 the chain is Cytoplasmic; it reads CQPLRSLHKRKDRCY. A helical transmembrane segment spans residues 161 to 181; it reads VIVSWALSLVFSVPQVYIFSL. The Extracellular portion of the chain corresponds to 182-206; sequence REIGNGVYDCWGDFVQPWGAKAYIT. A helical membrane pass occupies residues 207–227; the sequence is WISLTIYIIPVAILGGCYGLI. Over 228 to 276 the chain is Cytoplasmic; that stretch reads SFKIWQNFKRKTKKDQCITLTTAASKANALARVSSVKLVSKAKITTVKM. A helical transmembrane segment spans residues 277 to 297; the sequence is TFVIVLAYIVCWTPFFFVQMW. At 298–311 the chain is on the extracellular side; it reads SAWDPEAPREAMPF. Residues 312–332 traverse the membrane as a helical segment; that stretch reads IISMLLASLNSCCNPWIYMFF. The Cytoplasmic segment spans residues 333 to 390; sequence AGHLFHDLKQSLLCCSTLYLKSSQCRCDQEHDSRKSNCSTYVIKSTSSQRSITQSSIT.

It belongs to the G-protein coupled receptor 1 family. Vasopressin/oxytocin receptor subfamily. In terms of tissue distribution, expressed in brain, intestine, bladder, skeletal muscle, lateral line, gills and kidney.

It is found in the cell membrane. Its function is as follows. Binds to isotocin. Can also be activated by vasotocin, mesotocin, oxytocin and Arg-vasopressin, although these have lower potencies than isotocin. Produces an induction of membrane chloride currents indicating that it is coupled to the inositol phosphate/calcium pathway. This chain is Isotocin receptor, found in Catostomus commersonii (White sucker).